Reading from the N-terminus, the 345-residue chain is Protein RecA (345 aa).

Residue 68–75 coordinates ATP; that stretch reads GVESSGKT.

It belongs to the RecA family.

The protein localises to the cytoplasm. Can catalyze the hydrolysis of ATP in the presence of single-stranded DNA, the ATP-dependent uptake of single-stranded DNA by duplex DNA, and the ATP-dependent hybridization of homologous single-stranded DNAs. It interacts with LexA causing its activation and leading to its autocatalytic cleavage. This is Protein RecA from Aquifex aeolicus (strain VF5).